We begin with the raw amino-acid sequence, 520 residues long: Putative cytochrome P450 CYP13A3 (520 aa).

Cysteine 464 is a binding site for heme.

This sequence belongs to the cytochrome P450 family. Requires heme as cofactor.

Cytochromes P450 are a group of heme-thiolate monooxygenases. They oxidize a variety of structurally unrelated compounds, including steroids, fatty acids, and xenobiotics. The protein is Putative cytochrome P450 CYP13A3 (cyp-13A3) of Caenorhabditis elegans.